The sequence spans 57 residues: UPF0509 protein YciZ (57 aa).

It belongs to the UPF0509 family.

This is UPF0509 protein YciZ from Escherichia coli O127:H6 (strain E2348/69 / EPEC).